The sequence spans 232 residues: Putative homeobox protein NANOG2 (232 aa).

Positions 1 to 39 (MDLPIQDSHDSSTSPKGKQPTTAEKSATKKEDKVPVKKQ) are disordered. Positions 11–25 (SSTSPKGKQPTTAEK) are enriched in polar residues. A compositionally biased stretch (basic and acidic residues) spans 26–35 (SATKKEDKVP). 8 consecutive repeat copies span residues 123 to 127 (WSNQT), 128 to 132 (WNNST), 133 to 137 (WSNQT), 143 to 147 (WSNHS), 148 to 152 (WNTQT), 153 to 157 (WCTQS), 158 to 162 (WNNQA), and 163 to 167 (WNSPF). Positions 123 to 167 (WSNQTWNNSTWSNQTQNIQSWSNHSWNTQTWCTQSWNNQAWNSPF) are 8 X repeats starting with a Trp in each unit. Residues 123–167 (WSNQTWNNSTWSNQTQNIQSWSNHSWNTQTWCTQSWNNQAWNSPF) form a sufficient for transactivation activity region. Residues 168-232 (YNCGEESLQS…YSMNMQPEDV (65 aa)) are sufficient for strong transactivation activity.

Belongs to the Nanog homeobox family.

Its subcellular location is the nucleus. Its function is as follows. Probable transcriptional regulator. The polypeptide is Putative homeobox protein NANOG2 (NANOGP1) (Homo sapiens (Human)).